The primary structure comprises 321 residues: Ribose-phosphate pyrophosphokinase (321 aa).

ATP is bound by residues 44-46 (DGE) and 103-104 (RQ). Residues H137 and D179 each contribute to the Mg(2+) site. K202 is a catalytic residue. Residues R204, D228, and 232–236 (DTAGT) contribute to the D-ribose 5-phosphate site.

The protein belongs to the ribose-phosphate pyrophosphokinase family. Class I subfamily. Homohexamer. Mg(2+) serves as cofactor.

It is found in the cytoplasm. It carries out the reaction D-ribose 5-phosphate + ATP = 5-phospho-alpha-D-ribose 1-diphosphate + AMP + H(+). The protein operates within metabolic intermediate biosynthesis; 5-phospho-alpha-D-ribose 1-diphosphate biosynthesis; 5-phospho-alpha-D-ribose 1-diphosphate from D-ribose 5-phosphate (route I): step 1/1. Involved in the biosynthesis of the central metabolite phospho-alpha-D-ribosyl-1-pyrophosphate (PRPP) via the transfer of pyrophosphoryl group from ATP to 1-hydroxyl of ribose-5-phosphate (Rib-5-P). This is Ribose-phosphate pyrophosphokinase from Staphylococcus epidermidis (strain ATCC 35984 / DSM 28319 / BCRC 17069 / CCUG 31568 / BM 3577 / RP62A).